A 140-amino-acid polypeptide reads, in one-letter code: Lysozyme B (140 aa).

A signal peptide spans 1-18; the sequence is MKAFIVLVALALAAPALG. The region spanning 19 to 140 is the C-type lysozyme domain; it reads RTMDRCSLAR…GWLPSIDDCF (122 aa). 4 disulfides stabilise this stretch: Cys24-Cys139, Cys45-Cys129, Cys80-Cys96, and Cys92-Cys110. Catalysis depends on residues Glu50 and Asp68.

This sequence belongs to the glycosyl hydrolase 22 family. As to expression, found in the midgut.

The enzyme catalyses Hydrolysis of (1-&gt;4)-beta-linkages between N-acetylmuramic acid and N-acetyl-D-glucosamine residues in a peptidoglycan and between N-acetyl-D-glucosamine residues in chitodextrins.. Functionally, unlikely to play an active role in the humoral immune defense. May have a function in the digestion of bacteria in the food. This chain is Lysozyme B (LysB), found in Drosophila melanogaster (Fruit fly).